The primary structure comprises 290 residues: AA9 family lytic polysaccharide monooxygenase A (290 aa).

A signal peptide spans 1 to 17 (MKLSLLASVALVPFVSA). Cu(2+) contacts are provided by histidine 18 and histidine 101. Cysteine 67 and cysteine 189 are oxidised to a cystine. Histidine 176 is a binding site for O2. Tyrosine 187 serves as a coordination point for Cu(2+). 2 N-linked (GlcNAc...) asparagine glycosylation sites follow: asparagine 220 and asparagine 254. Residues 240-290 (GGSGSGSSSYSKVANVTSSDESSQSGASSSQGTVSTCPNKYNRRHARQFKP) are disordered. Positions 245–275 (GSSSYSKVANVTSSDESSQSGASSSQGTVST) are enriched in low complexity. Residues 280–290 (YNRRHARQFKP) show a composition bias toward basic residues.

The protein belongs to the polysaccharide monooxygenase AA9 family. Requires Cu(2+) as cofactor.

It localises to the secreted. It catalyses the reaction [(1-&gt;4)-beta-D-glucosyl]n+m + reduced acceptor + O2 = 4-dehydro-beta-D-glucosyl-[(1-&gt;4)-beta-D-glucosyl]n-1 + [(1-&gt;4)-beta-D-glucosyl]m + acceptor + H2O.. In terms of biological role, lytic polysaccharide monooxygenase (LPMO) that depolymerizes crystalline and amorphous polysaccharides via the oxidation of scissile alpha- or beta-(1-4)-glycosidic bonds, yielding exclusively C1 oxidation products. Catalysis by LPMOs requires the reduction of the active-site copper from Cu(II) to Cu(I) by a reducing agent and H(2)O(2) or O(2) as a cosubstrate. The polypeptide is AA9 family lytic polysaccharide monooxygenase A (Aspergillus fumigatus (strain ATCC MYA-4609 / CBS 101355 / FGSC A1100 / Af293) (Neosartorya fumigata)).